Here is a 174-residue protein sequence, read N- to C-terminus: Large ribosomal subunit protein uL18 (174 aa).

This sequence belongs to the universal ribosomal protein uL18 family. As to quaternary structure, part of the 50S ribosomal subunit. Contacts the 5S and 23S rRNAs.

Its function is as follows. This is one of the proteins that bind and probably mediate the attachment of the 5S RNA into the large ribosomal subunit, where it forms part of the central protuberance. The chain is Large ribosomal subunit protein uL18 from Methanocorpusculum labreanum (strain ATCC 43576 / DSM 4855 / Z).